The chain runs to 493 residues: Exosome complex component Rrp41 (493 aa).

2 disordered regions span residues V244–V264 and L291–E493. Positions A249–L259 are enriched in basic and acidic residues. The span at P297 to A377 shows a compositional bias: acidic residues. Positions P383 to A400 are enriched in basic and acidic residues. A compositionally biased stretch (acidic residues) spans S401–K471. Basic and acidic residues predominate over residues S472–E493.

It belongs to the RNase PH family. Rrp41 subfamily. Component of the archaeal exosome complex. Forms a hexameric ring-like arrangement composed of 3 Rrp41-Rrp42 heterodimers. The hexameric ring associates with a trimer of Rrp4 and/or Csl4 subunits.

The protein localises to the cytoplasm. Functionally, catalytic component of the exosome, which is a complex involved in RNA degradation. Has 3'-&gt;5' exoribonuclease activity. Can also synthesize heteromeric RNA-tails. The polypeptide is Exosome complex component Rrp41 (Methanosarcina mazei (strain ATCC BAA-159 / DSM 3647 / Goe1 / Go1 / JCM 11833 / OCM 88) (Methanosarcina frisia)).